We begin with the raw amino-acid sequence, 600 residues long: Brain-enriched guanylate kinase-associated protein (600 aa).

M1 carries the N-acetylmethionine modification. Residue Y137 is modified to Phosphotyrosine. The disordered stretch occupies residues 192-222 (PGSLSSRMSDASARDLGYRDGVEKSGPRPPY). A Phosphoserine modification is found at S200. Over residues 203–217 (SARDLGYRDGVEKSG) the composition is skewed to basic and acidic residues. Residues S229 and S246 each carry the phosphoserine modification. T249 is modified (phosphothreonine). Position 265 is a phosphoserine (S265). A disordered region spans residues 298-317 (SSYSSFSATSEEKEHAQAGT). S372 is modified (phosphoserine). R380 is modified (asymmetric dimethylarginine). A phosphoserine mark is found at S463, S473, S483, S485, S508, S510, and S514. Residues 537-590 (GAGSSPEPEHGSRESLEPSSMEASPEMHPPTRLSPQQAFPRTGGSGLSRKDSLT) form a disordered region. Positions 543–552 (EPEHGSRESL) are enriched in basic and acidic residues. A phosphoserine mark is found at S560 and S570.

As to quaternary structure, interacts with DLG4 and DLGAP1 and forms a ternary complex.

It localises to the cytoplasm. The protein localises to the membrane. Functionally, may sustain the structure of the postsynaptic density (PSD). In Mus musculus (Mouse), this protein is Brain-enriched guanylate kinase-associated protein (Begain).